The sequence spans 494 residues: Aspartyl/glutamyl-tRNA(Asn/Gln) amidotransferase subunit B (494 aa).

The disordered stretch occupies residues 475–494; that stretch reads TSGRADPKATNQMLAKKLKG.

It belongs to the GatB/GatE family. GatB subfamily. Heterotrimer of A, B and C subunits.

It catalyses the reaction L-glutamyl-tRNA(Gln) + L-glutamine + ATP + H2O = L-glutaminyl-tRNA(Gln) + L-glutamate + ADP + phosphate + H(+). The catalysed reaction is L-aspartyl-tRNA(Asn) + L-glutamine + ATP + H2O = L-asparaginyl-tRNA(Asn) + L-glutamate + ADP + phosphate + 2 H(+). Functionally, allows the formation of correctly charged Asn-tRNA(Asn) or Gln-tRNA(Gln) through the transamidation of misacylated Asp-tRNA(Asn) or Glu-tRNA(Gln) in organisms which lack either or both of asparaginyl-tRNA or glutaminyl-tRNA synthetases. The reaction takes place in the presence of glutamine and ATP through an activated phospho-Asp-tRNA(Asn) or phospho-Glu-tRNA(Gln). This chain is Aspartyl/glutamyl-tRNA(Asn/Gln) amidotransferase subunit B, found in Acaryochloris marina (strain MBIC 11017).